We begin with the raw amino-acid sequence, 509 residues long: Coiled-coil domain-containing protein 181 (509 aa).

Disordered regions lie at residues 1-122 (MDED…EDEE) and 237-369 (FLPP…EKKK). Basic and acidic residues-rich tracts occupy residues 22–33 (DLEWLINDKEKS) and 41–56 (ACKK…KENE). Positions 60–69 (ELGQQLSDPD) are enriched in polar residues. Basic and acidic residues-rich tracts occupy residues 70–82 (NSPK…RRND) and 266–275 (IKKEESEAKG). A compositionally biased stretch (polar residues) spans 319 to 333 (RIQSAGVSPVTSTYC). 2 coiled-coil regions span residues 335–377 (SPRQ…VFKA) and 418–488 (LKKK…RSKQ). A compositionally biased stretch (basic and acidic residues) spans 337-369 (RQKELQKQLERKREKLKREEEQRKLEEENEKKK).

The protein belongs to the CCDC181 family. As to quaternary structure, homodimer. Interacts with HOOK1. Interacts with HOOK2. Interacts with HOOK3. As to expression, predominantly expressed in testis. Expressed at lower level in brain, eye, trachea and lung. Barely expressed in tongue, heart, liver, kidney, spleen and muscle. Present at high level in elongating spermatids, whereas lower levels are observed in round spermatids (at protein level).

The protein resides in the cytoplasm. It localises to the cytoskeleton. The protein localises to the cell projection. It is found in the cilium. Its subcellular location is the flagellum. Microtubule-binding protein that localizes to the microtubular manchette of elongating spermatids. In Mus musculus (Mouse), this protein is Coiled-coil domain-containing protein 181.